The primary structure comprises 376 residues: 26S proteasome non-ATPase regulatory subunit 13 (376 aa).

Residues 171–338 enclose the PCI domain; the sequence is SYYKDALRFL…KRVHMTWVQP (168 aa).

As to quaternary structure, component of the 19S proteasome regulatory particle complex. The 26S proteasome consists of a 20S core particle (CP) and two 19S regulatory subunits (RP). The regulatory particle is made of a lid composed of 9 subunits including PSMD13, a base containing 6 ATPases and few additional components.

Component of the 26S proteasome, a multiprotein complex involved in the ATP-dependent degradation of ubiquitinated proteins. This complex plays a key role in the maintenance of protein homeostasis by removing misfolded or damaged proteins, which could impair cellular functions, and by removing proteins whose functions are no longer required. Therefore, the proteasome participates in numerous cellular processes, including cell cycle progression, apoptosis, or DNA damage repair. In Gallus gallus (Chicken), this protein is 26S proteasome non-ATPase regulatory subunit 13.